A 190-amino-acid polypeptide reads, in one-letter code: E3 ubiquitin-protein ligase RNF4 (190 aa).

Positions 1–16 (MSTRKRRGGAINSRQA) are required for ubiquitination activity. Positions 1–29 (MSTRKRRGGAINSRQAQKRTREATSTPEI) are disordered. A mediates interaction with TRPS1 region spans residues 4-61 (RKRRGGAINSRQAQKRTREATSTPEISLEAEPIELVETAGDEIVDLTCESLEPVVVDL). 4 short sequence motifs (SUMO interaction motif) span residues 36-39 (IELV), 46-49 (IVDL), 57-59 (VVV), and 67-70 (VVIV). 2 positions are modified to phosphoserine: Ser-94 and Ser-95. The Zn(2+) site is built by Cys-132, Cys-135, Cys-154, His-156, Cys-159, Cys-162, Cys-173, and Cys-176. The segment at 132 to 177 (CPICMDGYSEIVQNGRLIVSTECGHVFCSQCLRDSLKNANTCPTCR) adopts an RING-type zinc-finger fold.

Homodimer (via RING-type zinc finger domain). Interacts with GSC2. Interacts with AR/the androgen receptor and TBP. Interacts with TCF20. Interacts with PATZ1. Interacts with TRPS1; negatively regulates TRPS1 transcriptional repressor activity. Interacts with PML (isoform PML-1, isoform PML-2, isoform PML-3, isoform PML-4, isoform PML-5 and isoform PML-6). Interacts with PRDM1/Blimp-1. Post-translationally, sumoylated; conjugated by one or two SUMO1 moieties. Autoubiquitinated. In terms of tissue distribution, widely expressed at low levels in many tissues; highly expressed in testis.

Its subcellular location is the cytoplasm. It localises to the nucleus. It is found in the PML body. It carries out the reaction S-ubiquitinyl-[E2 ubiquitin-conjugating enzyme]-L-cysteine + [acceptor protein]-L-lysine = [E2 ubiquitin-conjugating enzyme]-L-cysteine + N(6)-ubiquitinyl-[acceptor protein]-L-lysine.. It participates in protein modification; protein ubiquitination. Functionally, E3 ubiquitin-protein ligase which binds polysumoylated chains covalently attached to proteins and mediates 'Lys-6'-, 'Lys-11'-, 'Lys-48'- and 'Lys-63'-linked polyubiquitination of those substrates and their subsequent targeting to the proteasome for degradation. Regulates the degradation of several proteins including PML and the transcriptional activator PEA3. Involved in chromosome alignment and spindle assembly, it regulates the kinetochore CENPH-CENPI-CENPK complex by targeting polysumoylated CENPI to proteasomal degradation. Regulates the cellular responses to hypoxia and heat shock through degradation of respectively EPAS1 and PARP1. Alternatively, it may also bind DNA/nucleosomes and have a more direct role in the regulation of transcription for instance enhancing basal transcription and steroid receptor-mediated transcriptional activation. Catalyzes ubiquitination of sumoylated PARP1 in response to PARP1 trapping to chromatin, leading to PARP1 removal from chromatin by VCP/p97. This is E3 ubiquitin-protein ligase RNF4 from Homo sapiens (Human).